The primary structure comprises 279 residues: Dehydrogenase/reductase SDR family member 4 (279 aa).

Leu37 to Val61 is a binding site for NADP(+). An N6-acetyllysine; alternate modification is found at Lys93. Lys93 is subject to N6-succinyllysine; alternate. N6-acetyllysine is present on Lys106. Substrate is bound at residue Ser170. Tyr183 (proton acceptor) is an active-site residue. Residue Lys187 participates in NADP(+) binding. The residue at position 217 (Lys217) is an N6-acetyllysine; alternate. At Lys217 the chain carries N6-succinyllysine; alternate. Ser221 carries the phosphoserine modification. N6-succinyllysine occurs at positions 228 and 235. Positions Ser277–Leu279 match the Peroxisomal targeting signal motif.

Belongs to the short-chain dehydrogenases/reductases (SDR) family. In terms of assembly, homotetramer.

Its subcellular location is the peroxisome. It carries out the reaction a secondary alcohol + NADP(+) = a ketone + NADPH + H(+). The enzyme catalyses 3alpha-hydroxy-5beta-pregnan-20-one + NADP(+) = 5beta-pregnan-3,20-dione + NADPH + H(+). The catalysed reaction is 5beta-dihydrotestosterone + NADPH + H(+) = 5beta-androstane-3alpha,17beta-diol + NADP(+). It catalyses the reaction all-trans-retinol + NADP(+) = all-trans-retinal + NADPH + H(+). It carries out the reaction isatin + NADPH + H(+) = 3-hydroxyindolin-2-one + NADP(+). Functionally, NADPH-dependent oxidoreductase which catalyzes the reduction of a variety of compounds bearing carbonyl groups including ketosteroids, alpha-dicarbonyl compounds, aldehydes, aromatic ketones and quinones. Reduces all-trans-retinal and 9-cis retinal. Reduces 3-ketosteroids and benzil into 3alpha-hydroxysteroids and S-benzoin, respectively, in contrast to the stereoselectivity of primates DHRS4s which produce 3beta-hydroxysteroids and R-benzoin. In the reverse reaction, catalyzes the NADP-dependent oxidation of 3alpha-hydroxysteroids and alcohol, but with much lower efficiency. Involved in the metabolism of 3alpha-hydroxysteroids, retinoid, isatin and xenobiotic carbonyl compounds. This Rattus norvegicus (Rat) protein is Dehydrogenase/reductase SDR family member 4 (Dhrs4).